The primary structure comprises 1263 residues: Kinesin-like protein KIN-12E (1263 aa).

The tract at residues 21–44 is disordered; it reads PAPSESLRSVPCTPEANTVSRDNH. Over residues 35–44 the composition is skewed to polar residues; the sequence is EANTVSRDNH. Residues 93–430 form the Kinesin motor domain; it reads NVQVIIRTRP…LKFAQRAKLI (338 aa). 174–181 contacts ATP; the sequence is GQTGSGKT. Coiled coils occupy residues 679–737, 764–805, 831–881, 905–966, 1091–1168, and 1193–1251; these read SKKL…KIRS, AEAH…AEEN, ALEV…KRLL, SEKS…HQSE, TDLL…TIQE, and LRKE…VLSL.

The protein belongs to the TRAFAC class myosin-kinesin ATPase superfamily. Kinesin family. KIN-12 subfamily.

This Arabidopsis thaliana (Mouse-ear cress) protein is Kinesin-like protein KIN-12E.